Reading from the N-terminus, the 272-residue chain is MIKVSDVCFSYTNNMDQLVLKNINVVFEKGKYYAILGHNGSGKSTFSKILSGIFKPQKGSIEVDGVLLNKENLTKIRKKIGIIFQNPDNQFVGATVEDDIAFSLENINEDPKKMSQIIANLAAKVQMESYLDREPQFLSGGQKQKVAIASVLALNPEIIIFDEITSMLDPRGKYDVVKILDDLRKDKTKTLISITHNMNEAILADEIIVFANGGIIAQGDPKLILNDKNIIEKAKIDSPFIYKISSALKLVSPTYDENELLEQLWKLKQKTS.

Positions 2–237 constitute an ABC transporter domain; that stretch reads IKVSDVCFSY…KNIIEKAKID (236 aa). Residue 37–44 coordinates ATP; that stretch reads GHNGSGKS.

The protein belongs to the ABC transporter superfamily. Energy-coupling factor EcfA family. As to quaternary structure, forms a stable energy-coupling factor (ECF) transporter complex composed of 2 membrane-embedded substrate-binding proteins (S component), 2 ATP-binding proteins (A component) and 2 transmembrane proteins (T component).

The protein resides in the cell membrane. In terms of biological role, ATP-binding (A) component of a common energy-coupling factor (ECF) ABC-transporter complex. Unlike classic ABC transporters this ECF transporter provides the energy necessary to transport a number of different substrates. The sequence is that of Energy-coupling factor transporter ATP-binding protein EcfA1 from Mesomycoplasma hyopneumoniae (strain J / ATCC 25934 / NCTC 10110) (Mycoplasma hyopneumoniae).